We begin with the raw amino-acid sequence, 3163 residues long: Genome polyprotein (3163 aa).

A Peptidase S30 domain is found at 219–362 (KMSDQGVDML…KTMSLKIVHF (144 aa)). Active-site for P1 proteinase activity residues include H270, D279, and S313. Positions 414–417 (KITC) match the Involved in interaction with stylet and aphid transmission motif. The Involved in virions binding and aphid transmission signature appears at 672-674 (PTK). Residues 698-820 (MYIAKEGYCY…ESSLKHYRVG (123 aa)) enclose the Peptidase C6 domain. Active-site for helper component proteinase activity residues include C706 and H779. The region spanning 1300-1452 (KIAHESDKDI…TQYPVSISTE (153 aa)) is the Helicase ATP-binding domain. ATP is bound at residue 1313–1320 (GAVGSGKS). The DEAH box motif lies at 1402-1405 (DECH). The Helicase C-terminal domain occupies 1471–1630 (DVISKGDNIL…GLPVITNNVS (160 aa)). Residues 1871–1888 (STNEMSKFLQLKGKWNKT) lie on the Cytoplasmic side of the membrane. The helical transmembrane segment at 1889-1909 (LITRDVLVICGVLGGGVWMVV) threads the bilayer. The Lumenal segment spans residues 1910–1923 (QHFRSKVSEPVTHE). The Nuclear localization signal motif lies at 1964-1971 (KKGKSKGR). A binding to host eIF(iso)4E region spans residues 1983 to 2017 (INMYGFDPEDFSAVRFVDPLTGATLDDNPFTDITL). An O-(5'-phospho-RNA)-tyrosine modification is found at Y1986. Residues 2116 to 2334 (SNSMFRGLRD…ISWGSLNIQA (219 aa)) form the Peptidase C4 domain. Active-site for nuclear inclusion protein A activity residues include H2161, D2196, and C2266. The 125-residue stretch at 2600-2724 (WVYCDADGSQ…SVHPEYEYIL (125 aa)) folds into the RdRp catalytic domain. Positions 2883–2934 (DLTEEQKQAEKEKKEREKAEKERERQKQLAFKKGKDVAQEEGKRDKEVNAGT) are disordered. The segment covering 2886 to 2930 (EEQKQAEKEKKEREKAEKERERQKQLAFKKGKDVAQEEGKRDKEV) has biased composition (basic and acidic residues).

Belongs to the potyviridae genome polyprotein family. Interacts with host eIF4E protein (via cap-binding region); this interaction mediates the translation of the VPg-viral RNA conjugates. Part of a complex that comprises VPg, RNA, host EIF4E and EIF4G; this interaction mediates the translation of the VPg-viral RNA conjugates. As to quaternary structure, interacts, via N-terminal region, with host Sec24a protein in COPII-coated vesicles. This binding triggers the formation of host endoplasmic reticulum (ER)-derived viral vesicles involved in cell-to-cell viral movement. Post-translationally, VPg is uridylylated by the polymerase and is covalently attached to the 5'-end of the genomic RNA. This uridylylated form acts as a nucleotide-peptide primer for the polymerase. In terms of processing, potyviral RNA is expressed as two polyproteins which undergo post-translational proteolytic processing. Genome polyprotein is processed by NIa-pro, P1 and HC-pro proteinases resulting in the production of at least ten individual proteins. P3N-PIPO polyprotein is cleaved by P1 and HC-pro proteinases resulting in the production of three individual proteins. The P1 proteinase and the HC-pro cleave only their respective C-termini autocatalytically. 6K1 is essential for proper proteolytic separation of P3 from CI.

The protein resides in the host cytoplasm. The protein localises to the host nucleus. Its subcellular location is the host cytoplasmic vesicle. It is found in the host membrane. It localises to the virion. It carries out the reaction RNA(n) + a ribonucleoside 5'-triphosphate = RNA(n+1) + diphosphate. It catalyses the reaction Hydrolyzes glutaminyl bonds, and activity is further restricted by preferences for the amino acids in P6 - P1' that vary with the species of potyvirus, e.g. Glu-Xaa-Xaa-Tyr-Xaa-Gln-|-(Ser or Gly) for the enzyme from tobacco etch virus. The natural substrate is the viral polyprotein, but other proteins and oligopeptides containing the appropriate consensus sequence are also cleaved.. The catalysed reaction is Hydrolyzes a Gly-|-Gly bond at its own C-terminus, commonly in the sequence -Tyr-Xaa-Val-Gly-|-Gly, in the processing of the potyviral polyprotein.. In terms of biological role, cysteine protease that cleaves a Gly-Gly dipeptide at its own C-terminus. Required for aphid transmission and also has proteolytic activity. Interacts with virions and aphid stylets. Acts as a suppressor of RNA-mediated gene silencing, also known as post-transcriptional gene silencing (PTGS), a mechanism of plant viral defense that limits the accumulation of viral RNAs. May have RNA-binding activity. Its function is as follows. Has helicase activity. It may be involved in replication. Indispensable for virus replication. Functionally, responsible for the formation of peripheral motile host endoplasmic reticulum (ER)-derived viral vesicles called 'viral factories', seat of the viral RNA (vRNA) replication and carrying vRNA to plasmodesmata for delivery into adjacent non-infected cells; this process relies on host Sec24a-binding. In terms of biological role, mediates the cap-independent, EIF4E-dependent translation of viral genomic RNAs. Binds to the cap-binding site of host EIF4E and thus interferes with the host EIF4E-dependent mRNA export and translation. VPg-RNA directly binds EIF4E and is a template for transcription. Also forms trimeric complexes with EIF4E-EIF4G, which are templates for translation. Its function is as follows. Has RNA-binding and proteolytic activities. RNA-dependent RNA polymerase that ensures transcription and replication of viral RNA (vRNA). Functionally, involved in aphid transmission, cell-to-cell and systemis movement, encapsidation of the viral RNA and in the regulation of viral RNA amplification. The protein is Genome polyprotein of Brassica (TuMV).